The following is a 215-amino-acid chain: Cytochrome c biogenesis ATP-binding export protein CcmA (215 aa).

Residues 12–215 (LAAHALTYSR…TRLLHLQKAP (204 aa)) enclose the ABC transporter domain. Residue 44–51 (GPNGIGKT) participates in ATP binding.

It belongs to the ABC transporter superfamily. CcmA exporter (TC 3.A.1.107) family. The complex is composed of two ATP-binding proteins (CcmA) and two transmembrane proteins (CcmB).

It is found in the cell inner membrane. The enzyme catalyses heme b(in) + ATP + H2O = heme b(out) + ADP + phosphate + H(+). Its function is as follows. Part of the ABC transporter complex CcmAB involved in the biogenesis of c-type cytochromes; once thought to export heme, this seems not to be the case, but its exact role is uncertain. Responsible for energy coupling to the transport system. The chain is Cytochrome c biogenesis ATP-binding export protein CcmA from Xylella fastidiosa (strain Temecula1 / ATCC 700964).